A 274-amino-acid polypeptide reads, in one-letter code: Pyridoxal phosphate homeostasis protein (274 aa).

The residue at position 6 (Ser6) is a Phosphoserine. Lys47 carries the N6-(pyridoxal phosphate)lysine modification. Tyr69 is modified (phosphotyrosine). Lys125 bears the N6-succinyllysine mark. A phosphoserine mark is found at Ser226 and Ser244.

Belongs to the pyridoxal phosphate-binding protein YggS/PROSC family.

Its function is as follows. Pyridoxal 5'-phosphate (PLP)-binding protein, which may be involved in intracellular homeostatic regulation of pyridoxal 5'-phosphate (PLP), the active form of vitamin B6. The polypeptide is Pyridoxal phosphate homeostasis protein (Mus musculus (Mouse)).